Consider the following 193-residue polypeptide: Tellurium resistance protein TerZ (193 aa).

The protein belongs to the CAPAB/TerDEXZ family.

In terms of biological role, not known; seems to contribute to the tellurium resistance (Ter) mechanism. Also involved in phage inhibition (Phi) and colicin resistance (PacB). The sequence is that of Tellurium resistance protein TerZ (terZ) from Serratia marcescens.